The chain runs to 333 residues: MIKVGINGFGRIGRMVFRAAVKNFGNDIQIVGINDLLDAEYLAYMLKYDSVHGRFEGEVAVEDGALIVNGNKIRLTAEMDPANLKWNEVDADVVVESTGFFLTDETARKHIQAGAKKVIMSAPSKDSTPMFVYGVNHTSYAGQDIISNASCTTNCLAPIAKVLNDKFGIVKGLMTTVHAATATQKTVDGPSKKDWRGGRGILENIIPSSTGAAKAVGKVLPVLNGKLTGMAFRVPTSDVSVVDLTVVLEKAATMAEINAAMKEASEGELKGILGYTEDAVVSTDFRGCANTSIYDSKAGISLDSNFAKVVSWYDNEWGYSNKVCEMARVIAAK.

NAD(+) contacts are provided by residues 11 to 12 (RI), D35, M79, and S121. D-glyceraldehyde 3-phosphate is bound by residues 150 to 152 (SCT), T181, 210 to 211 (TG), and R233. C151 (nucleophile) is an active-site residue. N315 contributes to the NAD(+) binding site.

The protein belongs to the glyceraldehyde-3-phosphate dehydrogenase family. In terms of assembly, homotetramer.

It localises to the cytoplasm. The catalysed reaction is D-glyceraldehyde 3-phosphate + phosphate + NAD(+) = (2R)-3-phospho-glyceroyl phosphate + NADH + H(+). It functions in the pathway carbohydrate degradation; glycolysis; pyruvate from D-glyceraldehyde 3-phosphate: step 1/5. In terms of biological role, catalyzes the oxidative phosphorylation of glyceraldehyde 3-phosphate (G3P) to 1,3-bisphosphoglycerate (BPG) using the cofactor NAD. The first reaction step involves the formation of a hemiacetal intermediate between G3P and a cysteine residue, and this hemiacetal intermediate is then oxidized to a thioester, with concomitant reduction of NAD to NADH. The reduced NADH is then exchanged with the second NAD, and the thioester is attacked by a nucleophilic inorganic phosphate to produce BPG. The sequence is that of Glyceraldehyde-3-phosphate dehydrogenase (gap) from Bacteroides fragilis (strain YCH46).